Consider the following 174-residue polypeptide: RNA pyrophosphohydrolase (174 aa).

Residues 6-149 (GYRPNVGIIL…KRDVYLGALK (144 aa)) form the Nudix hydrolase domain. A Nudix box motif is present at residues 38 to 59 (GGIKPGESPETAMYRELYEEVG).

It belongs to the Nudix hydrolase family. RppH subfamily. Requires a divalent metal cation as cofactor.

In terms of biological role, accelerates the degradation of transcripts by removing pyrophosphate from the 5'-end of triphosphorylated RNA, leading to a more labile monophosphorylated state that can stimulate subsequent ribonuclease cleavage. The chain is RNA pyrophosphohydrolase from Neisseria meningitidis serogroup C / serotype 2a (strain ATCC 700532 / DSM 15464 / FAM18).